A 508-amino-acid polypeptide reads, in one-letter code: UTP--glucose-1-phosphate uridylyltransferase (508 aa).

Phosphoserine is present on Ser-13. Residues 113–116, Lys-127, Gln-190, and Gly-222 each bind UTP; that span reads LNGG. 115-116 provides a ligand contact to substrate; sequence GG. Residue Lys-127 coordinates Mg(2+). Substrate contacts are provided by residues His-223 and 251-253; that span reads NID. UTP is bound by residues Asp-253 and Lys-396. Asp-253 serves as a coordination point for Mg(2+). Lys-396 is a catalytic residue. Thr-426 carries the post-translational modification Phosphothreonine. Phosphoserine is present on Ser-434. Residue Lys-438 is modified to N6-acetyllysine. 2 positions are modified to phosphoserine: Ser-448 and Ser-461. The oligomerization stretch occupies residues 457–508; that stretch reads HLTVSGDVTFGKNVSLKGTVIIIANHGDRIDIPPGAVLENKIVSGNLRILDH. The tract at residues 502–503 is critical for end-to-end subunit interaction; sequence NL.

Belongs to the UDPGP type 1 family. Homooctamer.

Its subcellular location is the cytoplasm. The enzyme catalyses alpha-D-glucose 1-phosphate + UTP + H(+) = UDP-alpha-D-glucose + diphosphate. It participates in glycan biosynthesis; glycogen biosynthesis. Functionally, UTP--glucose-1-phosphate uridylyltransferase catalyzing the conversion of glucose-1-phosphate into UDP-glucose, a crucial precursor for the production of glycogen. This Mus musculus (Mouse) protein is UTP--glucose-1-phosphate uridylyltransferase (Ugp2).